A 431-amino-acid polypeptide reads, in one-letter code: Histidine--tRNA ligase (431 aa).

Belongs to the class-II aminoacyl-tRNA synthetase family.

Its subcellular location is the cytoplasm. It carries out the reaction tRNA(His) + L-histidine + ATP = L-histidyl-tRNA(His) + AMP + diphosphate + H(+). The polypeptide is Histidine--tRNA ligase (hisS) (Pyrococcus abyssi (strain GE5 / Orsay)).